The chain runs to 842 residues: Valine--tRNA ligase (842 aa).

The 'HIGH' region motif lies at 86–96; sequence PFTSGELHMGH. Residues 572 to 576 carry the 'KMSKS' region motif; that stretch reads RMSKS. An ATP-binding site is contributed by Lys-575.

It belongs to the class-I aminoacyl-tRNA synthetase family. ValS type 2 subfamily.

It is found in the cytoplasm. It catalyses the reaction tRNA(Val) + L-valine + ATP = L-valyl-tRNA(Val) + AMP + diphosphate. Catalyzes the attachment of valine to tRNA(Val). As ValRS can inadvertently accommodate and process structurally similar amino acids such as threonine, to avoid such errors, it has a 'posttransfer' editing activity that hydrolyzes mischarged Thr-tRNA(Val) in a tRNA-dependent manner. This Saccharolobus solfataricus (strain ATCC 35092 / DSM 1617 / JCM 11322 / P2) (Sulfolobus solfataricus) protein is Valine--tRNA ligase.